A 381-amino-acid chain; its full sequence is DNA replication and repair protein RecF (381 aa).

An ATP-binding site is contributed by G30–T37.

It belongs to the RecF family.

The protein resides in the cytoplasm. Its function is as follows. The RecF protein is involved in DNA metabolism; it is required for DNA replication and normal SOS inducibility. RecF binds preferentially to single-stranded, linear DNA. It also seems to bind ATP. The protein is DNA replication and repair protein RecF of Lactobacillus delbrueckii subsp. bulgaricus (strain ATCC BAA-365 / Lb-18).